Consider the following 1134-residue polypeptide: Isoleucine--tRNA ligase (1134 aa).

Positions 52–62 (PFANGLPHYGH) match the 'HIGH' region motif. Positions 656–660 (KLSKR) match the 'KMSKS' region motif. Residue lysine 659 coordinates ATP.

Belongs to the class-I aminoacyl-tRNA synthetase family. IleS type 2 subfamily. Monomer. Zn(2+) is required as a cofactor.

Its subcellular location is the cytoplasm. It catalyses the reaction tRNA(Ile) + L-isoleucine + ATP = L-isoleucyl-tRNA(Ile) + AMP + diphosphate. Functionally, catalyzes the attachment of isoleucine to tRNA(Ile). As IleRS can inadvertently accommodate and process structurally similar amino acids such as valine, to avoid such errors it has two additional distinct tRNA(Ile)-dependent editing activities. One activity is designated as 'pretransfer' editing and involves the hydrolysis of activated Val-AMP. The other activity is designated 'posttransfer' editing and involves deacylation of mischarged Val-tRNA(Ile). The protein is Isoleucine--tRNA ligase of Wolbachia sp. subsp. Brugia malayi (strain TRS).